The primary structure comprises 687 residues: Glycine--tRNA ligase beta subunit (687 aa).

It belongs to the class-II aminoacyl-tRNA synthetase family. As to quaternary structure, tetramer of two alpha and two beta subunits.

It localises to the cytoplasm. It carries out the reaction tRNA(Gly) + glycine + ATP = glycyl-tRNA(Gly) + AMP + diphosphate. The protein is Glycine--tRNA ligase beta subunit of Geobacter sp. (strain M21).